The following is a 418-amino-acid chain: UDP-N-acetylglucosamine 1-carboxyvinyltransferase (418 aa).

Lys-22–Asn-23 is a binding site for phosphoenolpyruvate. Residue Arg-92 coordinates UDP-N-acetyl-alpha-D-glucosamine. The active-site Proton donor is Cys-116. 2-(S-cysteinyl)pyruvic acid O-phosphothioketal is present on Cys-116. Residues Arg-121–Leu-125, Asp-305, and Leu-327 each bind UDP-N-acetyl-alpha-D-glucosamine.

This sequence belongs to the EPSP synthase family. MurA subfamily.

It is found in the cytoplasm. It carries out the reaction phosphoenolpyruvate + UDP-N-acetyl-alpha-D-glucosamine = UDP-N-acetyl-3-O-(1-carboxyvinyl)-alpha-D-glucosamine + phosphate. It participates in cell wall biogenesis; peptidoglycan biosynthesis. Functionally, cell wall formation. Adds enolpyruvyl to UDP-N-acetylglucosamine. The chain is UDP-N-acetylglucosamine 1-carboxyvinyltransferase from Campylobacter jejuni subsp. jejuni serotype O:23/36 (strain 81-176).